Here is a 194-residue protein sequence, read N- to C-terminus: Imidazoleglycerol-phosphate dehydratase (194 aa).

Belongs to the imidazoleglycerol-phosphate dehydratase family.

Its subcellular location is the cytoplasm. The catalysed reaction is D-erythro-1-(imidazol-4-yl)glycerol 3-phosphate = 3-(imidazol-4-yl)-2-oxopropyl phosphate + H2O. It participates in amino-acid biosynthesis; L-histidine biosynthesis; L-histidine from 5-phospho-alpha-D-ribose 1-diphosphate: step 6/9. This is Imidazoleglycerol-phosphate dehydratase from Thermoanaerobacter pseudethanolicus (strain ATCC 33223 / 39E) (Clostridium thermohydrosulfuricum).